The chain runs to 737 residues: Protein OPG064 (737 aa).

Residue methionine 1 is modified to N-acetylmethionine; by host. Residues cysteine 496 and cysteine 535 are joined by a disulfide bond.

It belongs to the orthopoxvirus OPG064 family. Interacts with host KLC2; this interaction promotes IEV trafficking by engaging the host kinesin-1 complex. Interacts with protein OPG056/F12. N-acetylated on initiator methionine by host.

Plays a role in intracellular enveloped virus (IEV) transport to the cell surface on microtubules. Together with protein OPG056/F12, forms a complex that interacts with host KLC2 (kinesin light chain isoform 2) to engage the kinesin-1 complex and thereby promote IEV trafficking. The chain is Protein OPG064 (OPG064) from Bos taurus (Bovine).